The primary structure comprises 284 residues: 2-dehydro-3-deoxyphosphooctonate aldolase (284 aa).

This sequence belongs to the KdsA family.

It is found in the cytoplasm. The enzyme catalyses D-arabinose 5-phosphate + phosphoenolpyruvate + H2O = 3-deoxy-alpha-D-manno-2-octulosonate-8-phosphate + phosphate. The protein operates within carbohydrate biosynthesis; 3-deoxy-D-manno-octulosonate biosynthesis; 3-deoxy-D-manno-octulosonate from D-ribulose 5-phosphate: step 2/3. Its pathway is bacterial outer membrane biogenesis; lipopolysaccharide biosynthesis. The chain is 2-dehydro-3-deoxyphosphooctonate aldolase from Yersinia pseudotuberculosis serotype O:1b (strain IP 31758).